Reading from the N-terminus, the 110-residue chain is Hydrogenase maturation factor HypA (110 aa).

H2 serves as a coordination point for Ni(2+). Positions 70, 73, 86, and 89 each coordinate Zn(2+).

Belongs to the HypA/HybF family.

Its function is as follows. Involved in the maturation of [NiFe] hydrogenases. Required for nickel insertion into the metal center of the hydrogenase. This Geobacter sp. (strain M21) protein is Hydrogenase maturation factor HypA.